A 49-amino-acid chain; its full sequence is Small ribosomal subunit protein uS14B (49 aa).

This sequence belongs to the universal ribosomal protein uS14 family. Zinc-binding uS14 subfamily. Part of the 30S ribosomal subunit.

Binds 16S rRNA, required for the assembly of 30S particles. The sequence is that of Small ribosomal subunit protein uS14B from Natronomonas pharaonis (strain ATCC 35678 / DSM 2160 / CIP 103997 / JCM 8858 / NBRC 14720 / NCIMB 2260 / Gabara) (Halobacterium pharaonis).